A 163-amino-acid chain; its full sequence is E3 ubiquitin-protein ligase ATL23 (163 aa).

The chain crosses the membrane as a helical span at residues A35–W55. An RING-type; atypical zinc finger spans residues C104 to R146.

The protein belongs to the RING-type zinc finger family. ATL subfamily.

The protein resides in the membrane. The enzyme catalyses S-ubiquitinyl-[E2 ubiquitin-conjugating enzyme]-L-cysteine + [acceptor protein]-L-lysine = [E2 ubiquitin-conjugating enzyme]-L-cysteine + N(6)-ubiquitinyl-[acceptor protein]-L-lysine.. The protein operates within protein modification; protein ubiquitination. Functionally, E3 ubiquitin-protein ligase able to catalyze polyubiquitination with ubiquitin-conjugating enzyme E2 UBC8, UBC10, UBC11, UBC28 and UBC29 in vitro. This chain is E3 ubiquitin-protein ligase ATL23 (ATL23), found in Arabidopsis thaliana (Mouse-ear cress).